The primary structure comprises 423 residues: Cytochrome b mRNA maturase bI2 (423 aa).

At 1–31 the chain is on the mitochondrial matrix side; sequence MAFRKSNVYLSLVNSYIIDSPQPSSINYWWN. Residues 1–143 are cytochrome b; it reads MAFRKSNVYL…CVYGQMSHWG (143 aa). A helical membrane pass occupies residues 32-52; sequence MGSLLGLCLVIQIVTGIFMAM. Residues 53-84 are Mitochondrial intermembrane-facing; sequence HYSSNIELAFSSVEHIMRDVHNGYILRYLHAN. Residues 85-105 traverse the membrane as a helical segment; that stretch reads GASFFFMVMFMHMAKGLYYGS. Over 106–115 the chain is Mitochondrial matrix; that stretch reads YRSPRVTLWN. The chain crosses the membrane as a helical span at residues 116-136; it reads VGVIIFILTIATAFLGYCCVY. The Mitochondrial intermembrane portion of the chain corresponds to 137–153; the sequence is GQMSHWGNMNIASNMFN. The interval 144–423 is maturase; it reads NMNIASNMFN…SMKYKLGNYL (280 aa). Residues 154 to 174 traverse the membrane as a helical segment; it reads MMKTIYMMMLMLLIYIFYTIM. Topologically, residues 175-423 are mitochondrial matrix; sequence MRQMMKTKEY…SMKYKLGNYL (249 aa).

It in the N-terminal section; belongs to the cytochrome b family. In the C-terminal section; belongs to the LAGLIDADG endonuclease family.

Its subcellular location is the mitochondrion inner membrane. This protein is responsible for splicing and maturation of cytochrome b mRNA. Specifically, it may be responsible for the splicing specificity of the second intron. In Saccharomyces cerevisiae (strain ATCC 204508 / S288c) (Baker's yeast), this protein is Cytochrome b mRNA maturase bI2 (BI2).